A 620-amino-acid chain; its full sequence is mRNA cap guanine-N(7) methyltransferase (620 aa).

Disordered regions lie at residues 1–176 (MLPP…APSS) and 193–304 (AHAN…DDEY). Residues 29–44 (RSPSMSLSPRSQNQSL) show a composition bias toward polar residues. Composition is skewed to low complexity over residues 45 to 60 (PYPSSRPGSAAGSAHP) and 136 to 157 (PQPTTTPSSPSTSQHTPYTPHH). The mRNA cap 0 methyltransferase domain maps to 345–620 (SPIIGLKKFN…LYMGFAFEKM (276 aa)). Residue 354–355 (NN) coordinates mRNA. 6 residues coordinate S-adenosyl-L-methionine: lysine 358, glycine 377, aspartate 399, aspartate 428, glutamine 454, and tyrosine 459.

The protein belongs to the class I-like SAM-binding methyltransferase superfamily. mRNA cap 0 methyltransferase family.

The protein resides in the nucleus. The enzyme catalyses a 5'-end (5'-triphosphoguanosine)-ribonucleoside in mRNA + S-adenosyl-L-methionine = a 5'-end (N(7)-methyl 5'-triphosphoguanosine)-ribonucleoside in mRNA + S-adenosyl-L-homocysteine. In terms of biological role, responsible for methylating the 5'-cap structure of mRNAs. The chain is mRNA cap guanine-N(7) methyltransferase (ABD1) from Cryptococcus neoformans var. neoformans serotype D (strain JEC21 / ATCC MYA-565) (Filobasidiella neoformans).